The chain runs to 239 residues: Homeobox-leucine zipper protein HOX12 (239 aa).

The interval 25-65 is disordered; it reads ATSGGEQKKARQRRRRKVKPEAAAALAGESGGDEQAKKRRL. Residues 58–117 constitute a DNA-binding region (homeobox); the sequence is EQAKKRRLSDEQARFLEMSFKKERKLETPRKVQLAAELGLDAKQVAVWFQNRRARHKSKL. Residues 107–168 adopt a coiled-coil conformation; sequence QNRRARHKSK…KLAAVAAATT (62 aa).

It belongs to the HD-ZIP homeobox family. Class I subfamily. Expressed in seedlings, roots, stems, leaf sheaths and panicles.

It is found in the nucleus. Functionally, probable transcription factor. This is Homeobox-leucine zipper protein HOX12 (HOX12) from Oryza sativa subsp. japonica (Rice).